Consider the following 184-residue polypeptide: UPF0149 protein PSEEN5316 (184 aa).

Belongs to the UPF0149 family.

The chain is UPF0149 protein PSEEN5316 from Pseudomonas entomophila (strain L48).